Reading from the N-terminus, the 57-residue chain is Catalase-1 (57 aa).

Y37 serves as a coordination point for heme.

In terms of assembly, homodimer. Heme serves as cofactor.

It catalyses the reaction 2 H2O2 = O2 + 2 H2O. Its function is as follows. Decomposes hydrogen peroxide into water and oxygen; serves to protect cells from the toxic effects of hydrogen peroxide. In Comamonas terrigena, this protein is Catalase-1.